Here is a 356-residue protein sequence, read N- to C-terminus: NADH-quinone oxidoreductase subunit H (356 aa).

The next 8 membrane-spanning stretches (helical) occupy residues 18-38, 87-107, 120-140, 166-186, 205-225, 265-285, 292-312, and 333-353; these read IVMIAQSVLLLVVLLVAIAYI, GVFLLAPLVSCVLALAAWAVI, VGILFIFAISSLSIYGIIMAG, IGFVIITVLLCAGTLNLSAVV, ILNWYVWPLFPMFVVFYVSAL, AITTMCALATILFLGGWLPPI, WVPGVIWFALKLFFMFFLIAM, and FLPLSLVMVVIVAGVLHFAGI.

The protein belongs to the complex I subunit 1 family. In terms of assembly, NDH-1 is composed of 14 different subunits. Subunits NuoA, H, J, K, L, M, N constitute the membrane sector of the complex.

It localises to the cell inner membrane. It carries out the reaction a quinone + NADH + 5 H(+)(in) = a quinol + NAD(+) + 4 H(+)(out). Functionally, NDH-1 shuttles electrons from NADH, via FMN and iron-sulfur (Fe-S) centers, to quinones in the respiratory chain. The immediate electron acceptor for the enzyme in this species is believed to be ubiquinone. Couples the redox reaction to proton translocation (for every two electrons transferred, four hydrogen ions are translocated across the cytoplasmic membrane), and thus conserves the redox energy in a proton gradient. This subunit may bind ubiquinone. This is NADH-quinone oxidoreductase subunit H from Bradyrhizobium sp. (strain BTAi1 / ATCC BAA-1182).